A 420-amino-acid chain; its full sequence is CinA-like protein (420 aa).

The protein belongs to the CinA family.

The protein is CinA-like protein of Chloroherpeton thalassium (strain ATCC 35110 / GB-78).